The sequence spans 35 residues: Mu/omega-theraphotoxin-Tap1a (35 aa).

3 disulfide bridges follow: Cys3-Cys18, Cys10-Cys23, and Cys17-Cys30.

It belongs to the neurotoxin 10 (Hwtx-1) family. 59 (Tltx) subfamily. Expressed by the venom gland.

The protein resides in the secreted. In terms of biological role, gating-modifier toxin that inhibits both sodium (Nav) and calcium (Cav3) channels by inducing hyperpolarizing shift in voltage-dependence of activation and steady state inactivation. Inhibits Nav1.1/SCN1A, Nav1.2/SCN2A, Nav1.3/SCN3A, Nav1.6/SCN6A, Nav1.7/SCN9A and Cav3.1/CACNA1G sodium and calcium channels at nanomolar concentrations (IC(50)=81-301 nM). Surprisingly, selectively slows fast inactivation of Nav1.3/SCN3A. Also shows moderate inhibition of Cav3.2/CACNA1H calcium channels (IC(50)=1233 nM). Ex vivo, nearly ablates neuronal mechanosensitivity in afferent fibers innervating the colon and the bladder. In vivo, in a mouse model of irritable bowel syndrome, intracolonic administration of the toxin reverses colonic mechanical hypersensitivity. This Theraphosa apophysis (Goliath pinkfoot tarantula) protein is Mu/omega-theraphotoxin-Tap1a.